Reading from the N-terminus, the 991-residue chain is Bone morphogenetic protein 1 (991 aa).

The first 25 residues, 1–25, serve as a signal peptide directing secretion; it reads MPGVARPPLPLLSLPLLLLLLLLPR. Positions 26–125 are excised as a propeptide; sequence AGRPLDLADY…RWRGRPRSRR (100 aa). The disordered stretch occupies residues 86-131; it reads ARRPSIKAAGNSSALGGQGTSGQPQRESRGRWRGRPRSRRAATSRP. Residues 95 to 110 are compositionally biased toward polar residues; sequence GNSSALGGQGTSGQPQ. An N-linked (GlcNAc...) asparagine glycan is attached at N96. A compositionally biased stretch (basic residues) spans 116 to 127; that stretch reads RWRGRPRSRRAA. The Peptidase M12A domain occupies 126 to 325; the sequence is AATSRPERVW…AQARKLYKCP (200 aa). N147 carries an N-linked (GlcNAc...) asparagine glycan. 4 cysteine pairs are disulfide-bonded: C168–C324, C188–C210, C190–C191, and C327–C353. H218 serves as a coordination point for Zn(2+). E219 is a catalytic residue. 2 residues coordinate Zn(2+): H222 and H228. 2 consecutive CUB domains span residues 327-439 and 440-551; these read CGET…YEAI and CGGD…NFFK. N-linked (GlcNAc...) asparagine glycosylation is found at N337 and N368. Intrachain disulfides connect C380/C402, C440/C466, C493/C515, C556/C568, C564/C577, C579/C592, C596/C622, C649/C671, C712/C723, C719/C732, C734/C747, C752/C778, C805/C827, C865/C895, and C922/C944. Residues 552–593 enclose the EGF-like 1; calcium-binding domain; sequence EVDECSRPNRGGCEQRCLNTLGSYKCSCDPGYELAPDKRRCE. In terms of domain architecture, CUB 3 spans 596-707; sequence CGGFLTKLNG…KKGFKAHFFS (112 aa). N604 carries N-linked (GlcNAc...) asparagine glycosylation. One can recognise an EGF-like 2; calcium-binding domain in the interval 708–748; that stretch reads DKDECSKDNGGCQQDCVNTFGSYECQCRSGFVLHDNKHDCK. CUB domains follow at residues 752–864 and 865–981; these read CEHK…HSTE and CGGQ…YTST. Residues R939 and R942 each carry the omega-N-methylarginine modification.

As to quaternary structure, interacts with POSTN, the interaction promotes deposition on the extracellular matrix. The cofactor is Zn(2+). As to expression, at high levels in embryonic maternal deciduum and floor plate region of the neural tube. Less in developing membranous and endochondral bone, submucosa of intestine, dermis of skin and the mesenchyme of spleen and lung.

The protein localises to the golgi apparatus. It is found in the trans-Golgi network. The protein resides in the secreted. Its subcellular location is the extracellular space. It localises to the extracellular matrix. It catalyses the reaction Cleavage of the C-terminal propeptide at Ala-|-Asp in type I and II procollagens and at Arg-|-Asp in type III.. With respect to regulation, activity is increased by the procollagen C-endopeptidase enhancer protein. Metalloprotease that plays key roles in regulating the formation of the extracellular matrix (ECM) via processing of various precursor proteins into mature functional enzymes or structural proteins. Thereby participates in several developmental and physiological processes such as cartilage and bone formation, muscle growth and homeostasis, wound healing and tissue repair. Roles in ECM formation include cleavage of the C-terminal propeptides from procollagens such as procollagen I, II and III or the proteolytic activation of the enzyme lysyl oxidase LOX, necessary to formation of covalent cross-links in collagen and elastic fibers. Additional substrates include matricellular thrombospondin-1/THBS1 whose cleavage leads to cell adhesion disruption and TGF-beta activation. The chain is Bone morphogenetic protein 1 (Bmp1) from Mus musculus (Mouse).